Consider the following 240-residue polypeptide: Molybdate/tungstate import ATP-binding protein WtpC (240 aa).

The 226-residue stretch at phenylalanine 2–serine 227 folds into the ABC transporter domain. An ATP-binding site is contributed by glycine 31 to serine 38.

The protein belongs to the ABC transporter superfamily. Sulfate/tungstate importer (TC 3.A.1.6) family. The complex is composed of two ATP-binding proteins (WtpC), two transmembrane proteins (WtpB) and a solute-binding protein (WtpA).

Its subcellular location is the cell membrane. It carries out the reaction tungstate(in) + ATP + H2O = tungstate(out) + ADP + phosphate + H(+). Part of the ABC transporter complex WtpABC involved in molybdate/tungstate import. Responsible for energy coupling to the transport system. The sequence is that of Molybdate/tungstate import ATP-binding protein WtpC (wtpC) from Archaeoglobus fulgidus (strain ATCC 49558 / DSM 4304 / JCM 9628 / NBRC 100126 / VC-16).